The following is a 445-amino-acid chain: Tubulin beta-2A chain (445 aa).

The MREI motif signature appears at 1 to 4; the sequence is MREI. Residue glutamine 11 coordinates GTP. Serine 40 carries the phosphoserine modification. Residue lysine 58 is modified to N6-acetyllysine; alternate. The residue at position 58 (lysine 58) is an N6-succinyllysine; alternate. Lysine 58 is covalently cross-linked (Glycyl lysine isopeptide (Lys-Gly) (interchain with G-Cter in ubiquitin); alternate). GTP is bound by residues glutamate 69, serine 138, glycine 142, threonine 143, and glycine 144. Glutamate 69 is a binding site for Mg(2+). A Phosphoserine; by CDK1 modification is found at serine 172. GTP is bound by residues asparagine 204 and asparagine 226. 2 positions are modified to phosphothreonine: threonine 285 and threonine 290. The residue at position 318 (arginine 318) is an Omega-N-methylarginine. Lysine 324 is covalently cross-linked (Glycyl lysine isopeptide (Lys-Gly) (interchain with G-Cter in ubiquitin)). Residues 422–445 are disordered; it reads YQQYQDATADEQGEFEEEEGEDEA. Positions 429-445 are enriched in acidic residues; that stretch reads TADEQGEFEEEEGEDEA. Glutamate 438 carries the post-translational modification 5-glutamyl polyglutamate.

This sequence belongs to the tubulin family. Interacts with ZNRF1. Part of a complex composed at least of ASH2L, EMSY, HCFC1, HSPA8, CCAR2, MATR3, MKI67, RBBP5, TUBB2A, WDR5 and ZNF335; this complex may have a histone H3-specific methyltransferase activity. Dimer of alpha and beta chains. A typical microtubule is a hollow water-filled tube with an outer diameter of 25 nm and an inner diameter of 15 nM. Alpha-beta heterodimers associate head-to-tail to form protofilaments running lengthwise along the microtubule wall with the beta-tubulin subunit facing the microtubule plus end conferring a structural polarity. Microtubules usually have 13 protofilaments but different protofilament numbers can be found in some organisms and specialized cells. Mg(2+) is required as a cofactor. Post-translationally, some glutamate residues at the C-terminus are polyglutamylated, resulting in polyglutamate chains on the gamma-carboxyl group. Polyglutamylation plays a key role in microtubule severing by spastin (SPAST). SPAST preferentially recognizes and acts on microtubules decorated with short polyglutamate tails: severing activity by SPAST increases as the number of glutamates per tubulin rises from one to eight, but decreases beyond this glutamylation threshold. Glutamylation is also involved in cilia motility. Some glutamate residues at the C-terminus are monoglycylated but not polyglycylated due to the absence of functional TTLL10 in human. Monoglycylation is mainly limited to tubulin incorporated into cilia and flagella axonemes, which is required for their stability and maintenance. Flagella glycylation controls sperm motility. Both polyglutamylation and monoglycylation can coexist on the same protein on adjacent residues, and lowering glycylation levels increases polyglutamylation, and reciprocally. In terms of processing, phosphorylated on Ser-172 by CDK1 during the cell cycle, from metaphase to telophase, but not in interphase. This phosphorylation inhibits tubulin incorporation into microtubules. As to expression, high expression in brain, where it represents 30% of all beta-tubulins.

The protein localises to the cytoplasm. It is found in the cytoskeleton. Its function is as follows. Tubulin is the major constituent of microtubules, a cylinder consisting of laterally associated linear protofilaments composed of alpha- and beta-tubulin heterodimers. Microtubules grow by the addition of GTP-tubulin dimers to the microtubule end, where a stabilizing cap forms. Below the cap, tubulin dimers are in GDP-bound state, owing to GTPase activity of alpha-tubulin. This is Tubulin beta-2A chain (TUBB2A) from Homo sapiens (Human).